A 184-amino-acid chain; its full sequence is Ribosome-recycling factor (184 aa).

This sequence belongs to the RRF family.

Its subcellular location is the cytoplasm. In terms of biological role, responsible for the release of ribosomes from messenger RNA at the termination of protein biosynthesis. May increase the efficiency of translation by recycling ribosomes from one round of translation to another. The polypeptide is Ribosome-recycling factor (Psychrobacter arcticus (strain DSM 17307 / VKM B-2377 / 273-4)).